The chain runs to 35 residues: Photosystem II reaction center protein T (35 aa).

The helical transmembrane segment at 3–23 (ALVYTFLLVSTLGIIFFAIFF) threads the bilayer.

Belongs to the PsbT family. PSII is composed of 1 copy each of membrane proteins PsbA, PsbB, PsbC, PsbD, PsbE, PsbF, PsbH, PsbI, PsbJ, PsbK, PsbL, PsbM, PsbT, PsbY, PsbZ, Psb30/Ycf12, at least 3 peripheral proteins of the oxygen-evolving complex and a large number of cofactors. It forms dimeric complexes.

It localises to the plastid. The protein resides in the chloroplast thylakoid membrane. In terms of biological role, found at the monomer-monomer interface of the photosystem II (PS II) dimer, plays a role in assembly and dimerization of PSII. PSII is a light-driven water plastoquinone oxidoreductase, using light energy to abstract electrons from H(2)O, generating a proton gradient subsequently used for ATP formation. The polypeptide is Photosystem II reaction center protein T (Saururus cernuus (Lizard's tail)).